The chain runs to 75 residues: uncharacterized protein (75 aa).

Positions M1–I14 are enriched in low complexity. The segment at M1–K30 is disordered.

This is an uncharacterized protein from Dictyostelium discoideum (Social amoeba).